The following is a 322-amino-acid chain: Lipoyl synthase 2 (322 aa).

The disordered stretch occupies residues 1-36 (MKVILDLLNNDPRTTQRTERPRHPEKANRPDTPMES). Over residues 14–34 (TTQRTERPRHPEKANRPDTPM) the composition is skewed to basic and acidic residues. Residues cysteine 67, cysteine 72, cysteine 78, cysteine 93, cysteine 97, cysteine 100, and serine 306 each contribute to the [4Fe-4S] cluster site. A Radical SAM core domain is found at 79–295 (WAKKHATFMI…EKTAYAKGFL (217 aa)).

The protein belongs to the radical SAM superfamily. Lipoyl synthase family. It depends on [4Fe-4S] cluster as a cofactor.

The protein localises to the cytoplasm. The enzyme catalyses [[Fe-S] cluster scaffold protein carrying a second [4Fe-4S](2+) cluster] + N(6)-octanoyl-L-lysyl-[protein] + 2 oxidized [2Fe-2S]-[ferredoxin] + 2 S-adenosyl-L-methionine + 4 H(+) = [[Fe-S] cluster scaffold protein] + N(6)-[(R)-dihydrolipoyl]-L-lysyl-[protein] + 4 Fe(3+) + 2 hydrogen sulfide + 2 5'-deoxyadenosine + 2 L-methionine + 2 reduced [2Fe-2S]-[ferredoxin]. It functions in the pathway protein modification; protein lipoylation via endogenous pathway; protein N(6)-(lipoyl)lysine from octanoyl-[acyl-carrier-protein]: step 2/2. Catalyzes the radical-mediated insertion of two sulfur atoms into the C-6 and C-8 positions of the octanoyl moiety bound to the lipoyl domains of lipoate-dependent enzymes, thereby converting the octanoylated domains into lipoylated derivatives. The chain is Lipoyl synthase 2 from Bradyrhizobium diazoefficiens (strain JCM 10833 / BCRC 13528 / IAM 13628 / NBRC 14792 / USDA 110).